Reading from the N-terminus, the 817-residue chain is Dual specificity tyrosine-phosphorylation-regulated kinase mbk-2 (817 aa).

4 disordered regions span residues 1 to 46 (MAAL…HECP), 70 to 148 (PTSF…GPLG), 186 to 206 (GSYE…GSQQ), and 301 to 396 (LPNV…FRPE). Residues 7–25 (FTRNSRSYGQQPIDVTQQG) show a composition bias toward polar residues. Composition is skewed to low complexity over residues 70-81 (PTSFSGASSSSS) and 97-111 (NLLG…SNSL). Polar residues-rich tracts occupy residues 122-143 (SGNT…TNNL) and 193-206 (GQAQ…GSQQ). Residues 303 to 318 (NVGTSSSNGSSNSSSG) show a composition bias toward low complexity. Over residues 327–351 (LMTQSIGGPNKHLSASHSTLNTAST) the composition is skewed to polar residues. At Ser-362 the chain carries Phosphoserine; by cdk-1. Residues 364–392 (SNESLSRSHTSSSGGSQGGHNSNSGSNSG) show a composition bias toward low complexity. The 314-residue stretch at 461–774 (YEVLKVIGKG…PAQALKHKWL (314 aa)) folds into the Protein kinase domain. Residues 467-475 (IGKGSFGQV) and Lys-490 contribute to the ATP site. Catalysis depends on Asp-587, which acts as the Proton acceptor. Position 621 is a phosphotyrosine; by autocatalysis (Tyr-621).

It belongs to the protein kinase superfamily. CMGC Ser/Thr protein kinase family. MNB/DYRK subfamily. Part of a complex, consisting of pseudophosphatases egg-3, egg-4, egg-5 and kinase mbk-2; this complex is required for the oocyte-to-zygote transition. Interacts (via Tyr-619 and Tyr-621) with egg-4 (via tyrosine-protein phosphatase domain) and egg-5 (via tyrosine-protein phosphatase domain); mbk-2 tyrosine phosphorylation enhances the interaction. The interaction inhibits mbk-2 kinase activity and is required for mbk-2 oocyte cortex localization. Interacts (via N-terminus) with egg-3 (via tyrosine-protein phosphatase domain); the interaction does not affect mbk-2 kinase activity, is enhanced by mbk-2 tyrosine phosphorylation status and requires prior binding of mbk-2 to egg-4 and egg-5. It depends on Mg(2+) as a cofactor. Post-translationally, autophosphorylated. As to expression, in L1 larvae, expressed widely in the nervous system, including head neurons and the ventral nerve cord. In adult animals, continues to be expressed in the nervous system and is also expressed in body wall muscle.

The protein resides in the cytoplasm. The protein localises to the cell cortex. It carries out the reaction L-seryl-[protein] + ATP = O-phospho-L-seryl-[protein] + ADP + H(+). It catalyses the reaction L-threonyl-[protein] + ATP = O-phospho-L-threonyl-[protein] + ADP + H(+). The catalysed reaction is L-tyrosyl-[protein] + ATP = O-phospho-L-tyrosyl-[protein] + ADP + H(+). Its activity is regulated as follows. Activated during oocyte maturation by phosphorylation on Ser-362 by cdk-1. The pseudotyrosine phosphatases egg-4 and egg-5 sequester activated mbk-2 until the meiotic divisions and inhibit mbk-2 kinase activity directly, using a mixed-inhibition mechanism that does not involve tyrosine dephosphorylation. Its function is as follows. Required for oocyte-to-zygote transition in which it phosphorylates oocyte proteins, including mei-1, oma-1, oma-2, mex-5, and mex-6, modifying their activity and/or stability following meiosis. Through phosphorylation of P granule components including meg-1, promotes the disassembly of zygotic P granules in the anterior cytoplasm during zygote polarization, and thus plays a role in P granule distribution and segregation in early stage embryos following meiosis. Functions in both spindle positioning and in the posterior localization of cytoplasmic determinants, including pie-1, pos-1, and pgl-1, in early embryos. Involved in the asymmetric distribution of plk-1 at the 2-cell embryonic stage. The chain is Dual specificity tyrosine-phosphorylation-regulated kinase mbk-2 from Caenorhabditis elegans.